The chain runs to 181 residues: Ubiquitin-like protein 4B (181 aa).

A Ubiquitin-like domain is found at 1-76; the sequence is MWLTVKLLLG…LNVIIRPLEK (76 aa). The interval 139–181 is disordered; it reads PEGKHSGATGSTRESKGDMEPRRNMKCNLAHKDGFKREKSPGK. 2 stretches are compositionally biased toward basic and acidic residues: residues 151 to 161 and 168 to 181; these read RESKGDMEPRR and AHKDGFKREKSPGK.

Its subcellular location is the cytoplasm. This chain is Ubiquitin-like protein 4B (UBL4B), found in Monodelphis domestica (Gray short-tailed opossum).